The following is a 156-amino-acid chain: Small ribosomal subunit protein uS7 (156 aa).

It belongs to the universal ribosomal protein uS7 family. Part of the 30S ribosomal subunit. Contacts proteins S9 and S11.

In terms of biological role, one of the primary rRNA binding proteins, it binds directly to 16S rRNA where it nucleates assembly of the head domain of the 30S subunit. Is located at the subunit interface close to the decoding center, probably blocks exit of the E-site tRNA. The polypeptide is Small ribosomal subunit protein uS7 (Leptothrix cholodnii (strain ATCC 51168 / LMG 8142 / SP-6) (Leptothrix discophora (strain SP-6))).